A 310-amino-acid chain; its full sequence is Basic salivary proline-rich protein 4 (310 aa).

The N-terminal stretch at 1–16 (MLLILLSVALLALSSA) is a signal peptide. A disordered region spans residues 14 to 310 (SSAESSSEDV…RPAQGQQPPQ (297 aa)). 9 consecutive repeat copies span residues 35–55 (KPEG…PPPG), 56–76 (KPQG…PPPG), 77–97 (KPEG…PHPG), 98–118 (KPER…PHPG), 119–139 (KPES…PTPG), 140–160 (KPEG…PPPG), 161–181 (KPEG…PHPG), 182–202 (KPER…PPPG), and 203–223 (KPER…PHPG). The interval 35–234 (KPEGRRPQGG…PEGPPPQEGN (200 aa)) is 9.5 X 21 AA tandem repeats of K-P-[EQ]-[GR]-[PR]-[PR]-P-Q-G-G-N-Q-[PS]-[QH]-[RG]-[PT]-P-P-[PH]-P-G. The segment covering 48 to 63 (QRPPPPPGKPQGPPPQ) has biased composition (pro residues). N-linked (GlcNAc...) asparagine glycans are attached at residues N66, N87, and N108. The segment covering 133–147 (GPPPTPGKPEGPPPQ) has biased composition (pro residues). 3 N-linked (GlcNAc...) asparagine glycosylation sites follow: N150, N171, and N192. Positions 196 to 210 (RPPPPPGKPERPPPQ) are enriched in pro residues. Residue N213 is glycosylated (N-linked (GlcNAc...) asparagine). The span at 217 to 231 (GPPPHPGKPEGPPPQ) shows a compositional bias: pro residues. A 10; truncated repeat occupies 224–234 (KPEGPPPQEGN). An N-linked (GlcNAc...) asparagine glycan is attached at N234. Over residues 258–310 (QGPPPPGKPQGPPPAGGNPQQPQAPPAGKPQGPPPPPQGGRPPRPAQGQQPPQ) the composition is skewed to pro residues.

N-glycosylated. In terms of processing, proteolytically cleaved at the tripeptide Xaa-Pro-Gln, where Xaa in the P(3) position is mostly lysine. The endoprotease may be of microbial origin. Pyroglutamate formation found on at least Gln-46, Gln-48, Gln-67, Gln-88; Gln-90; Gln-193; Gln-288 Gln-214 and Gln-295, preferentially in diabetic, and head and neck cancer patients.

It is found in the secreted. The sequence is that of Basic salivary proline-rich protein 4 (PRB4) from Homo sapiens (Human).